The sequence spans 416 residues: 3-oxoacyl-[acyl-carrier-protein] synthase 2 (416 aa).

The Ketosynthase family 3 (KS3) domain maps to 6–414; that stretch reads KKRVVVTGLG…GHNVTLAFKK (409 aa). Catalysis depends on for beta-ketoacyl synthase activity residues cysteine 167, histidine 307, and histidine 344.

This sequence belongs to the thiolase-like superfamily. Beta-ketoacyl-ACP synthases family. As to quaternary structure, homodimer.

It catalyses the reaction a fatty acyl-[ACP] + malonyl-[ACP] + H(+) = a 3-oxoacyl-[ACP] + holo-[ACP] + CO2. It carries out the reaction (9Z)-hexadecenoyl-[ACP] + malonyl-[ACP] + H(+) = 3-oxo-(11Z)-octadecenoyl-[ACP] + holo-[ACP] + CO2. It functions in the pathway lipid metabolism; fatty acid biosynthesis. Involved in the type II fatty acid elongation cycle. Catalyzes the elongation of a wide range of acyl-ACP by the addition of two carbons from malonyl-ACP to an acyl acceptor. Can efficiently catalyze the conversion of palmitoleoyl-ACP (cis-hexadec-9-enoyl-ACP) to cis-vaccenoyl-ACP (cis-octadec-11-enoyl-ACP), an essential step in the thermal regulation of fatty acid composition. The polypeptide is 3-oxoacyl-[acyl-carrier-protein] synthase 2 (fabF) (Synechocystis sp. (strain ATCC 27184 / PCC 6803 / Kazusa)).